The chain runs to 682 residues: Guanylate cyclase soluble subunit beta-2 (682 aa).

Histidine 43 is a binding site for heme. In terms of domain architecture, Guanylate cyclase spans 408–536 (TILFSDVVTF…DTVNTASRME (129 aa)). A disordered region spans residues 592–667 (MGRPSAPADG…QPSPDETKTS (76 aa)). The segment covering 649–667 (RNSTDAVNNQPSPDETKTS) has biased composition (polar residues).

It belongs to the adenylyl cyclase class-4/guanylyl cyclase family. In terms of assembly, heterodimer of an alpha and a beta chain. Heme serves as cofactor. Kidney and liver.

The protein localises to the cytoplasm. It catalyses the reaction GTP = 3',5'-cyclic GMP + diphosphate. With respect to regulation, activated by nitric oxide in the presence of magnesium or manganese ions. The polypeptide is Guanylate cyclase soluble subunit beta-2 (Gucy1b2) (Rattus norvegicus (Rat)).